Here is a 1183-residue protein sequence, read N- to C-terminus: DNA-directed RNA polymerase subunit beta (1183 aa).

This sequence belongs to the RNA polymerase beta chain family. As to quaternary structure, the RNAP catalytic core consists of 2 alpha, 1 beta, 1 beta' and 1 omega subunit. When a sigma factor is associated with the core the holoenzyme is formed, which can initiate transcription.

It carries out the reaction RNA(n) + a ribonucleoside 5'-triphosphate = RNA(n+1) + diphosphate. Its function is as follows. DNA-dependent RNA polymerase catalyzes the transcription of DNA into RNA using the four ribonucleoside triphosphates as substrates. This chain is DNA-directed RNA polymerase subunit beta, found in Staphylococcus aureus (strain COL).